The sequence spans 262 residues: Tryptophan synthase alpha chain (262 aa).

Residues E48 and D59 each act as proton acceptor in the active site.

It belongs to the TrpA family. As to quaternary structure, tetramer of two alpha and two beta chains.

The catalysed reaction is (1S,2R)-1-C-(indol-3-yl)glycerol 3-phosphate + L-serine = D-glyceraldehyde 3-phosphate + L-tryptophan + H2O. Its pathway is amino-acid biosynthesis; L-tryptophan biosynthesis; L-tryptophan from chorismate: step 5/5. Its function is as follows. The alpha subunit is responsible for the aldol cleavage of indoleglycerol phosphate to indole and glyceraldehyde 3-phosphate. This Helicobacter pylori (strain J99 / ATCC 700824) (Campylobacter pylori J99) protein is Tryptophan synthase alpha chain.